The following is a 333-amino-acid chain: Serine/threonine-protein phosphatase 4 catalytic subunit 1 (333 aa).

The disordered stretch occupies residues Met-1–Thr-28. Residues Asp-7–Leu-27 are compositionally biased toward polar residues. 4 residues coordinate Mn(2+): Asp-79, His-81, Asp-107, and Asn-139. Residue His-140 is the Proton donor of the active site. Mn(2+) is bound by residues His-189 and His-264. Leu-333 carries the leucine methyl ester modification.

It belongs to the PPP phosphatase family. PP-4 (PP-X) subfamily. In terms of assembly, serine/threonine-protein phosphatase 4 (PP4) occurs in different assemblies of the catalytic and one or more regulatory subunits. The regulatory subunits are likely to be ppfr-1, ppfr-2, ppfr-4 and smk-1. Interacts with mei-1. Mn(2+) is required as a cofactor. Methylation at the C-terminal Leu-333 is critical for interactions with regulatory subunits.

It is found in the cytoplasm. Its subcellular location is the cytoskeleton. The protein resides in the microtubule organizing center. The protein localises to the centrosome. The catalysed reaction is O-phospho-L-seryl-[protein] + H2O = L-seryl-[protein] + phosphate. It carries out the reaction O-phospho-L-threonyl-[protein] + H2O = L-threonyl-[protein] + phosphate. Functionally, protein phosphatase which plays an essential role in meiosis and in early embryonic mitosis. During spermatocyte meiosis and the first embryonic mitosis, regulates centrosome maturation, and thus spindle formation, by recruiting some of the components of the pericentriolar material (PCM). During oocyte meiosis I, regulates meiotic chromosome dynamics including synapsis-independent chromosome pairing, restriction of synapsis to homologous chromosomes, programmed DNA double-strand break initiation and crossover formation resulting in chiasma formation. During oocyte meiosis II and probably together with regulatory subunit ppfr-1, may regulate microtubule severing by dephosphorylating and activating mei-1, a component of the katanin microtubule severing complex. This is Serine/threonine-protein phosphatase 4 catalytic subunit 1 from Caenorhabditis elegans.